A 437-amino-acid polypeptide reads, in one-letter code: tRNA-2-methylthio-N(6)-dimethylallyladenosine synthase (437 aa).

In terms of domain architecture, MTTase N-terminal spans 1-115 (MKVYIETMGC…ISQVIHKEKA (115 aa)). C10, C46, C78, C148, C152, and C155 together coordinate [4Fe-4S] cluster. Residues 134 to 367 (KKAQIRSLLN…QNRHKEILEE (234 aa)) form the Radical SAM core domain. The TRAM domain occupies 370–436 (KLEVGKTHVV…KGRLMAATKG (67 aa)).

It belongs to the methylthiotransferase family. MiaB subfamily. As to quaternary structure, monomer. [4Fe-4S] cluster is required as a cofactor.

It localises to the cytoplasm. The catalysed reaction is N(6)-dimethylallyladenosine(37) in tRNA + (sulfur carrier)-SH + AH2 + 2 S-adenosyl-L-methionine = 2-methylsulfanyl-N(6)-dimethylallyladenosine(37) in tRNA + (sulfur carrier)-H + 5'-deoxyadenosine + L-methionine + A + S-adenosyl-L-homocysteine + 2 H(+). Catalyzes the methylthiolation of N6-(dimethylallyl)adenosine (i(6)A), leading to the formation of 2-methylthio-N6-(dimethylallyl)adenosine (ms(2)i(6)A) at position 37 in tRNAs that read codons beginning with uridine. This is tRNA-2-methylthio-N(6)-dimethylallyladenosine synthase from Helicobacter pylori (strain ATCC 700392 / 26695) (Campylobacter pylori).